We begin with the raw amino-acid sequence, 79 residues long: Acyl carrier protein (79 aa).

Positions 1-76 constitute a Carrier domain; the sequence is MSLEDDVIAI…DVFTYIKKRQ (76 aa). An O-(pantetheine 4'-phosphoryl)serine modification is found at S36.

Belongs to the acyl carrier protein (ACP) family. Post-translationally, 4'-phosphopantetheine is transferred from CoA to a specific serine of apo-ACP by AcpS. This modification is essential for activity because fatty acids are bound in thioester linkage to the sulfhydryl of the prosthetic group.

It is found in the cytoplasm. Its pathway is lipid metabolism; fatty acid biosynthesis. Functionally, carrier of the growing fatty acid chain in fatty acid biosynthesis. This is Acyl carrier protein from Chlamydia pneumoniae (Chlamydophila pneumoniae).